Reading from the N-terminus, the 122-residue chain is Large ribosomal subunit protein uL14 (122 aa).

The protein belongs to the universal ribosomal protein uL14 family. As to quaternary structure, part of the 50S ribosomal subunit. Forms a cluster with proteins L3 and L19. In the 70S ribosome, L14 and L19 interact and together make contacts with the 16S rRNA in bridges B5 and B8.

Binds to 23S rRNA. Forms part of two intersubunit bridges in the 70S ribosome. The protein is Large ribosomal subunit protein uL14 of Mycolicibacterium vanbaalenii (strain DSM 7251 / JCM 13017 / BCRC 16820 / KCTC 9966 / NRRL B-24157 / PYR-1) (Mycobacterium vanbaalenii).